Here is a 226-residue protein sequence, read N- to C-terminus: N-(5'-phosphoribosyl)anthranilate isomerase 2 (226 aa).

It belongs to the TrpF family.

The enzyme catalyses N-(5-phospho-beta-D-ribosyl)anthranilate = 1-(2-carboxyphenylamino)-1-deoxy-D-ribulose 5-phosphate. The protein operates within amino-acid biosynthesis; L-tryptophan biosynthesis; L-tryptophan from chorismate: step 3/5. In Methanosarcina mazei (strain ATCC BAA-159 / DSM 3647 / Goe1 / Go1 / JCM 11833 / OCM 88) (Methanosarcina frisia), this protein is N-(5'-phosphoribosyl)anthranilate isomerase 2 (trpF2).